A 322-amino-acid polypeptide reads, in one-letter code: MDESALERYFEDSIANDSGFILEEELGLHSPALSSTQDSTYLSGRAGPSRESGAELDLSFLPDDLSTQEELGHHDNTAQAEDRAVSQDSAVCLDYDSQNSATPAATFDQQNPSLLGGGVHNSPFYSMTPMTPMTPMTPVTERSGIIPQLQNIVSTVNLGCPLDLKFIALQARNAEYNPKRFAAVIMRIREPRTTALIFSSGKMVCTGAKSEEQSRLAARKYARVVQKLGFPARFMDFKIQNMVASCDVCFPIRLEGLVLTHQQFSSYEPELFPGLIYRMVKPRIVLLIFVSGKVVLTGAKERAEIYEAFENIYPILRGFRKQ.

Residues Pro-31–Ala-54 form a disordered region. The segment covering Ala-32–Leu-42 has biased composition (polar residues).

Belongs to the TBP family.

The protein resides in the nucleus. Its function is as follows. TATA box-binding transcription factor. Members of the TBP family are differentially required to regulate transcription and development during early embryogenesis. The chain is TATA box-binding protein-like 2 from Takifugu rubripes (Japanese pufferfish).